A 148-amino-acid polypeptide reads, in one-letter code: UPF0756 membrane protein YeaL (148 aa).

The next 4 membrane-spanning stretches (helical) occupy residues 14 to 34 (ALGFISHNTTVAVSILVLIIV), 51 to 71 (LSIGIIILTIGVMAPIASGTL), 86 to 106 (LVAIAVGVIVYWLGGRGVTLM), and 121 to 141 (VLGVALFRGVPVGPLIAAGLV).

It belongs to the UPF0756 family.

It is found in the cell membrane. This is UPF0756 membrane protein YeaL from Shigella dysenteriae serotype 1 (strain Sd197).